A 377-amino-acid chain; its full sequence is Nitric oxide reductase FlRd-NAD(+) reductase (377 aa).

It belongs to the FAD-dependent oxidoreductase family. FAD serves as cofactor.

The protein localises to the cytoplasm. It carries out the reaction 2 reduced [nitric oxide reductase rubredoxin domain] + NAD(+) + H(+) = 2 oxidized [nitric oxide reductase rubredoxin domain] + NADH. It functions in the pathway nitrogen metabolism; nitric oxide reduction. One of at least two accessory proteins for anaerobic nitric oxide (NO) reductase. Reduces the rubredoxin moiety of NO reductase. The chain is Nitric oxide reductase FlRd-NAD(+) reductase from Salmonella dublin (strain CT_02021853).